Consider the following 328-residue polypeptide: Malate dehydrogenase (328 aa).

11 to 17 lines the NAD(+) pocket; sequence GAAGQIG. Substrate-binding residues include Arg94 and Arg100. Residues Asn107, Gln114, and 131 to 133 contribute to the NAD(+) site; that span reads VGN. Substrate is bound by residues Asn133 and Arg164. His189 acts as the Proton acceptor in catalysis.

The protein belongs to the LDH/MDH superfamily. MDH type 2 family.

It catalyses the reaction (S)-malate + NAD(+) = oxaloacetate + NADH + H(+). Its function is as follows. Catalyzes the reversible oxidation of malate to oxaloacetate. The polypeptide is Malate dehydrogenase (Xylella fastidiosa (strain 9a5c)).